The following is a 798-amino-acid chain: Cadherin-20 (798 aa).

The signal sequence occupies residues 1–35; it reads MWTSGRMSNAKNLFGLGVSLYFWGLMDLTTTVLSG. Positions 36-58 are excised as a propeptide; the sequence is SARPLTEGPEDNLSDKLHQRMKR. Asn47 is a glycosylation site (N-linked (GlcNAc...) asparagine). Residues 59–618 lie on the Extracellular side of the membrane; that stretch reads SWVWNQFFVL…AYVLPVSLSR (560 aa). Cadherin domains are found at residues 60-164, 165-273, 274-392, 389-493, and 493-615; these read WVWN…EPKF, LDGP…PPRF, PQKH…EPSF, EPSF…APEF, and FARF…LPVS. Positions 88 to 90 match the Cell attachment site motif; that stretch reads RGD. Asn260 carries an N-linked (GlcNAc...) asparagine glycan. N-linked (GlcNAc...) asparagine glycans are attached at residues Asn419, Asn460, and Asn541. A helical membrane pass occupies residues 619 to 639; it reads GALIAILACIFVLLVLVLLIL. Residues 640 to 798 are Cytoplasmic-facing; the sequence is SMRRQRKQPY…GATDSSGALW (159 aa).

As to expression, detected in embryonic spinal cord, in the brachial and lumbar section of motor neurons (at protein level). Detected in ventro-lateral portion of embryonic spinal cord, in the brachial and lumbar section of embryonic motor neurons. Detected in embryonic adductor motor neurons and embryonic dorsal root ganglion. Detected in the caudal half of newly generated somites and in presomitic mesoderm.

The protein resides in the cell membrane. In terms of biological role, cadherins are calcium-dependent cell adhesion proteins. They preferentially interact with themselves in a homophilic manner in connecting cells; cadherins may thus contribute to the sorting of heterogeneous cell types. The protein is Cadherin-20 (CDH20) of Gallus gallus (Chicken).